The following is a 253-amino-acid chain: Claudin domain-containing protein 1 (253 aa).

Residues Phe5–Ala25 traverse the membrane as a helical segment. N-linked (GlcNAc...) asparagine glycosylation is found at Asn42 and Asn72. 3 helical membrane passes run Phe141–Ala161, Ile175–Ile195, and Phe216–Ala236.

It belongs to the PMP-22/EMP/MP20 family. In terms of tissue distribution, in the brain, highly expressed in endothelial cells of the cerebellum compared to other regions (at protein level).

The protein resides in the cell junction. It is found in the tight junction. The protein localises to the cell membrane. Functionally, plays a role in negatively regulating the permeability of cells to small molecules. The polypeptide is Claudin domain-containing protein 1 (Cldnd1) (Mus musculus (Mouse)).